The following is a 132-amino-acid chain: Cliotide T2 (132 aa).

Residues 1–28 form the signal peptide; sequence MAYVRLTSLAVLFFLAASVMLNVKKTEG. Residues 29–58 constitute a cross-link (cyclopeptide (Gly-Asn)); sequence GEFLKCGESCVQGECYTPGCSCDWPICKKN. 3 disulfide bridges follow: C34-C48, C38-C50, and C43-C55. The propeptide at 59 to 132 is removed in mature form; it reads HIIATNAKTV…NLKMPMTIIN (74 aa).

This is a cyclic peptide. Expressed in flower, stem, shoot and pod but not in root, leaf, seed and nodule (at protein level).

Functionally, probably participates in a plant defense mechanism. Not active against Gram-negative bacteria E.coli ATCC 700926, K.pneumoniae ATTC 13883 and P.aeruginosa ATCC 39018 at concentration up to 100 uM. Has cytotoxic but no hemolytic activity. The protein is Cliotide T2 of Clitoria ternatea (Butterfly pea).